A 264-amino-acid chain; its full sequence is Small ribosomal subunit protein eS1 (264 aa).

The interval 232-264 (HGEGGGAGKPSGDEAGTKVERADGYEPPVQESV) is disordered. The span at 242–255 (SGDEAGTKVERADG) shows a compositional bias: basic and acidic residues.

The protein belongs to the eukaryotic ribosomal protein eS1 family. Component of the small ribosomal subunit. Mature ribosomes consist of a small (40S) and a large (60S) subunit. The 40S subunit contains about 33 different proteins and 1 molecule of RNA (18S). The 60S subunit contains about 49 different proteins and 3 molecules of RNA (28S, 5.8S and 5S). Part of the small subunit (SSU) processome, composed of more than 70 proteins and the RNA chaperone small nucleolar RNA (snoRNA) U3.

It localises to the cytoplasm. It is found in the nucleus. The protein resides in the nucleolus. Functionally, component of the small ribosomal subunit. The ribosome is a large ribonucleoprotein complex responsible for the synthesis of proteins in the cell. Part of the small subunit (SSU) processome, first precursor of the small eukaryotic ribosomal subunit. During the assembly of the SSU processome in the nucleolus, many ribosome biogenesis factors, an RNA chaperone and ribosomal proteins associate with the nascent pre-rRNA and work in concert to generate RNA folding, modifications, rearrangements and cleavage as well as targeted degradation of pre-ribosomal RNA by the RNA exosome. May play a role during erythropoiesis. The polypeptide is Small ribosomal subunit protein eS1 (Taeniopygia guttata (Zebra finch)).